Here is a 201-residue protein sequence, read N- to C-terminus: Adenylyl-sulfate kinase (201 aa).

35-42 (GLSGSGKS) contacts ATP. The Phosphoserine intermediate role is filled by Ser-109.

The protein belongs to the APS kinase family.

It carries out the reaction adenosine 5'-phosphosulfate + ATP = 3'-phosphoadenylyl sulfate + ADP + H(+). Its pathway is sulfur metabolism; hydrogen sulfide biosynthesis; sulfite from sulfate: step 2/3. In terms of biological role, catalyzes the synthesis of activated sulfate. The sequence is that of Adenylyl-sulfate kinase from Erwinia tasmaniensis (strain DSM 17950 / CFBP 7177 / CIP 109463 / NCPPB 4357 / Et1/99).